The sequence spans 23 residues: Aurein-4.3 (23 aa).

The protein belongs to the frog skin active peptide (FSAP) family. Aurein subfamily. As to expression, expressed by the skin dorsal glands.

It localises to the secreted. Functionally, has no antimicrobial or anticancer activity. In Ranoidea aurea (Green and golden bell frog), this protein is Aurein-4.3.